Reading from the N-terminus, the 284-residue chain is Pheromone-regulated membrane protein 4 (284 aa).

A helical transmembrane segment spans residues 20–38; it reads IISLTLVLLGVFSFLLLTW. The region spanning 157-272 is the Glutaredoxin domain; sequence RTDFLDIIRT…PLLKSEARGN (116 aa).

It is found in the membrane. This Saccharomyces cerevisiae (strain ATCC 204508 / S288c) (Baker's yeast) protein is Pheromone-regulated membrane protein 4 (PRM4).